The sequence spans 688 residues: Glycine--tRNA ligase beta subunit (688 aa).

This sequence belongs to the class-II aminoacyl-tRNA synthetase family. In terms of assembly, tetramer of two alpha and two beta subunits.

Its subcellular location is the cytoplasm. It carries out the reaction tRNA(Gly) + glycine + ATP = glycyl-tRNA(Gly) + AMP + diphosphate. The protein is Glycine--tRNA ligase beta subunit of Listeria monocytogenes serotype 4b (strain CLIP80459).